The sequence spans 126 residues: MKEVIFTENAPKPIGPYSQAIKAGNFLFIAGQIPIDPKTGEIVKGDIKDQTRQVLENIKAILEAAGYSLNDVIKVTVYLKDMNDFAKMNEVYAEYFGESKPARVAVEVSRLPKDVLIEIEAIAYKE.

The protein belongs to the RutC family.

The polypeptide is RutC family protein PH0854 (Pyrococcus horikoshii (strain ATCC 700860 / DSM 12428 / JCM 9974 / NBRC 100139 / OT-3)).